A 235-amino-acid chain; its full sequence is Small ribosomal subunit protein uS3 (235 aa).

The region spanning 39–107 (IRQYVFKALP…DVSLNIVEIR (69 aa)) is the KH type-2 domain.

Belongs to the universal ribosomal protein uS3 family. Part of the 30S ribosomal subunit. Forms a tight complex with proteins S10 and S14.

In terms of biological role, binds the lower part of the 30S subunit head. Binds mRNA in the 70S ribosome, positioning it for translation. This Sphingopyxis alaskensis (strain DSM 13593 / LMG 18877 / RB2256) (Sphingomonas alaskensis) protein is Small ribosomal subunit protein uS3.